A 146-amino-acid chain; its full sequence is 3-hydroxyacyl-[acyl-carrier-protein] dehydratase FabZ (146 aa).

Histidine 48 is a catalytic residue.

This sequence belongs to the thioester dehydratase family. FabZ subfamily.

Its subcellular location is the cytoplasm. The enzyme catalyses a (3R)-hydroxyacyl-[ACP] = a (2E)-enoyl-[ACP] + H2O. In terms of biological role, involved in unsaturated fatty acids biosynthesis. Catalyzes the dehydration of short chain beta-hydroxyacyl-ACPs and long chain saturated and unsaturated beta-hydroxyacyl-ACPs. The protein is 3-hydroxyacyl-[acyl-carrier-protein] dehydratase FabZ of Acetivibrio thermocellus (strain ATCC 27405 / DSM 1237 / JCM 9322 / NBRC 103400 / NCIMB 10682 / NRRL B-4536 / VPI 7372) (Clostridium thermocellum).